The primary structure comprises 715 residues: Fatty acid oxidation complex subunit alpha (715 aa).

The segment at 1 to 190 (MIYQGKAITV…KVGAVDAVVA (190 aa)) is enoyl-CoA hydratase/isomerase. Asp-297 provides a ligand contact to substrate. The interval 312 to 715 (HDAKQAAVLG…MAKNGQRFFN (404 aa)) is 3-hydroxyacyl-CoA dehydrogenase. NAD(+) is bound by residues Met-325, Asp-344, 401-403 (VVE), Lys-408, and Ser-430. His-451 acts as the For 3-hydroxyacyl-CoA dehydrogenase activity in catalysis. Asn-454 provides a ligand contact to NAD(+). Residues Asn-501 and Tyr-660 each coordinate substrate.

It in the N-terminal section; belongs to the enoyl-CoA hydratase/isomerase family. In the C-terminal section; belongs to the 3-hydroxyacyl-CoA dehydrogenase family. Heterotetramer of two alpha chains (FadB) and two beta chains (FadA).

The catalysed reaction is a (3S)-3-hydroxyacyl-CoA + NAD(+) = a 3-oxoacyl-CoA + NADH + H(+). It catalyses the reaction a (3S)-3-hydroxyacyl-CoA = a (2E)-enoyl-CoA + H2O. It carries out the reaction a 4-saturated-(3S)-3-hydroxyacyl-CoA = a (3E)-enoyl-CoA + H2O. The enzyme catalyses (3S)-3-hydroxybutanoyl-CoA = (3R)-3-hydroxybutanoyl-CoA. The catalysed reaction is a (3Z)-enoyl-CoA = a 4-saturated (2E)-enoyl-CoA. It catalyses the reaction a (3E)-enoyl-CoA = a 4-saturated (2E)-enoyl-CoA. Its pathway is lipid metabolism; fatty acid beta-oxidation. Its function is as follows. Involved in the aerobic and anaerobic degradation of long-chain fatty acids via beta-oxidation cycle. Catalyzes the formation of 3-oxoacyl-CoA from enoyl-CoA via L-3-hydroxyacyl-CoA. It can also use D-3-hydroxyacyl-CoA and cis-3-enoyl-CoA as substrate. The sequence is that of Fatty acid oxidation complex subunit alpha from Ectopseudomonas oleovorans (Pseudomonas oleovorans).